Here is a 965-residue protein sequence, read N- to C-terminus: Villin-3 (965 aa).

6 Gelsolin-like repeats span residues 27 to 79, 150 to 190, 262 to 304, 401 to 452, 533 to 573, and 635 to 676; these read ENFE…DEAG, VHLK…QERA, GQVE…EERK, ANSK…EDQE, NKAL…EQQE, and FQVE…KEKQ. Composition is skewed to low complexity over residues 769-780 and 808-828; these read AFNSSSGRTSSP and SSPS…ASQR. 2 disordered regions span residues 769 to 828 and 840 to 906; these read AFNS…ASQR and TAEK…GVTF. The segment covering 865 to 879 has biased composition (acidic residues); the sequence is EATEEATEAKEEEEV. S880 is subject to Phosphoserine. Positions 900–965 constitute an HP domain; the sequence is ETTGVTFTYE…DLLKKKFNLF (66 aa).

This sequence belongs to the villin/gelsolin family. In terms of tissue distribution, expressed in all tissues examined, including root hairs.

The protein localises to the cytoplasm. The protein resides in the cytoskeleton. Functionally, binds actin and actin filament bundles in a Ca(2+)-insensitive manner, but severs actin filaments in a calcium-dependent manner, regardless of the presence or not of VLN1 (AC O81643). Acts redundantly with VLN2 (AC O81644) to generate thick actin filament bundles, to regulate directional organ growth and in sclerenchyma development. This is Villin-3 from Arabidopsis thaliana (Mouse-ear cress).